The primary structure comprises 268 residues: Microtubule-associated protein RP/EB family member 1 (268 aa).

Ala-2 is subject to N-acetylalanine. The Calponin-homology (CH) domain maps to 14-116 (NLSRHDMLAW…FVQWFKKFFD (103 aa)). Lys-66 is modified (N6-crotonyllysine). Tyr-124 bears the Phosphotyrosine mark. An interaction with MTUS2/TIP150 region spans residues 124 to 268 (YDPVAARQGQ…GGPQEEQEEY (145 aa)). Residues 146 to 160 (LNKPKKPLSSSSAAP) show a composition bias toward low complexity. A disordered region spans residues 146-191 (LNKPKKPLSSSSAAPQRPISTQRTAAAPKAGPGVVRKNPGVGNGDD). Residues Ser-155 and Ser-165 each carry the phosphoserine modification. Positions 185-255 (GVGNGDDEAA…LYATDEGFVI (71 aa)) constitute an EB1 C-terminal domain. The tract at residues 185 to 268 (GVGNGDDEAA…GGPQEEQEEY (84 aa)) is interaction with CDK5RAP2. The interval 206 to 211 (TVEDLE) is interaction with APC. Positions 208-268 (EDLEKERDFY…GGPQEEQEEY (61 aa)) are DCTN1-binding. Position 220 is an N6-acetyllysine (Lys-220). The tract at residues 220–242 (KLRNIELICQENEGENDPVLQRI) is APC-binding. The interaction with SKA1 stretch occupies residues 232–255 (EGENDPVLQRIVDILYATDEGFVI).

The protein belongs to the MAPRE family. As to quaternary structure, homodimer. Heterodimer with MAPRE3. Interacts with DCTN1, DCTN2, TERF1 and dynein intermediate chain. Interaction with DIAPH1 and DIAPH2. Interacts (via C-terminal residues 206-211) with APC (via C-terminal residues 2674-2845); the interaction inhibits association with and bundling of F-actin. Interacts with CLASP2, DST, KIF2C and STIM1; probably required for their targeting to the growing microtubule plus ends. Interacts with MTUS2; interaction is direct and probably targets MTUS2 to microtubules. Interacts (via C-terminus) with SKA1 (via SXIP motif); the interaction is direct and stabilizes the kinetochore-microtubule attachment of the SKA1 complex. Interacts with APC2. Interacts with CLASP1. Interacts with CDK5RAP2. Interacts with MACF1. Interacts with RABL2/RABL2A; binds preferentially to GTP-bound RABL2. Interacts with KCNAB2. Interacts (via C-terminus) with CLIP1. Interacts with SLAIN2 and SLAIN1. Interacts with KIF18B; this interaction is required for efficient accumulation of KIF18B at microtubule plus ends. Interacts with MISP. Interacts with KNSTRN. Interacts with NCKAP5L. Interacts with CAMSAP2. Interacts with PDE4DIP isoform 13/MMG8/SMYLE; this interaction is required for its recruitment to the Golgi apparatus. Forms a pericentrosomal complex with AKAP9, CDK5RAP2 and PDE4DIP isoform 13/MMG8/SMYLE; within this complex, MAPRE1 binding to CDK5RAP2 may be mediated by PDE4DIP. Interacts with AKNA. Interacts with GAS2L1, GAS2L2, and GAS2L3. Interacts with RARRES1 and AGBL2. In terms of processing, acetylation at Lys-220 by KAT2B/PCAF promotes dynamic kinetochore-microtubule interactions in early mitosis. Crotonylated by KAT5 during mitosis, promoting astral microtubule plasticity and dynamic connection between astral microtubules and the cortex during mitotic chromosome segregation, thereby ensuring accurate spindle positioning in mitosis. Decrotonylated by HDAC3.

The protein resides in the cytoplasm. The protein localises to the cytoskeleton. It is found in the microtubule organizing center. Its subcellular location is the centrosome. It localises to the golgi apparatus. The protein resides in the spindle. The protein localises to the spindle pole. Its function is as follows. Plus-end tracking protein (+TIP) that binds to the plus-end of microtubules and regulates the dynamics of the microtubule cytoskeleton. Recruits other +TIP proteins to microtubules by binding to a conserved Ser-X-Leu-Pro (SXLP) motif in their polypeptide chains. Promotes cytoplasmic microtubule nucleation and elongation. Involved in mitotic spindle positioning by stabilizing microtubules and promoting dynamic connection between astral microtubules and the cortex during mitotic chromosome segregation. Assists chromosome alignment in metaphase by recruiting the SKA complex to the spindle and stabilizing its interactions with microtubule bundles (K-fibers). Also acts as a regulator of minus-end microtubule organization: interacts with the complex formed by AKAP9 and PDE4DIP, leading to recruit CAMSAP2 to the Golgi apparatus, thereby tethering non-centrosomal minus-end microtubules to the Golgi, an important step for polarized cell movement. Promotes elongation of CAMSAP2-decorated microtubule stretches on the minus-end of microtubules. Acts as a regulator of autophagosome transport via interaction with CAMSAP2. Functions downstream of Rho GTPases and DIAPH1 in stable microtubule formation. May play a role in cell migration. The protein is Microtubule-associated protein RP/EB family member 1 (MAPRE1) of Pongo abelii (Sumatran orangutan).